We begin with the raw amino-acid sequence, 353 residues long: Mitochondrial distribution and morphology protein 10 (353 aa).

It belongs to the MDM10 family. In terms of assembly, component of the ER-mitochondria encounter structure (ERMES) or MDM complex, composed of MMM1, MDM10, MDM12 and MDM34. Associates with the mitochondrial outer membrane sorting assembly machinery SAM(core) complex.

The protein localises to the mitochondrion outer membrane. Its function is as follows. Component of the ERMES/MDM complex, which serves as a molecular tether to connect the endoplasmic reticulum and mitochondria. Components of this complex are involved in the control of mitochondrial shape and protein biogenesis and may function in phospholipid exchange. MDM10 is involved in the late assembly steps of the general translocase of the mitochondrial outer membrane (TOM complex). Functions in the TOM40-specific route of the assembly of outer membrane beta-barrel proteins, including the association of TOM40 with the receptor TOM22 and small TOM proteins. Can associate with the SAM(core) complex as well as the MDM12-MMM1 complex, both involved in late steps of the major beta-barrel assembly pathway, that is responsible for biogenesis of all outer membrane beta-barrel proteins. May act as a switch that shuttles between both complexes and channels precursor proteins into the TOM40-specific pathway. Plays a role in mitochondrial morphology and in the inheritance of mitochondria. This chain is Mitochondrial distribution and morphology protein 10, found in Yarrowia lipolytica (strain CLIB 122 / E 150) (Yeast).